Reading from the N-terminus, the 120-residue chain is Putative pterin-4-alpha-carbinolamine dehydratase (120 aa).

Belongs to the pterin-4-alpha-carbinolamine dehydratase family.

The enzyme catalyses (4aS,6R)-4a-hydroxy-L-erythro-5,6,7,8-tetrahydrobiopterin = (6R)-L-erythro-6,7-dihydrobiopterin + H2O. In Bdellovibrio bacteriovorus (strain ATCC 15356 / DSM 50701 / NCIMB 9529 / HD100), this protein is Putative pterin-4-alpha-carbinolamine dehydratase.